The chain runs to 350 residues: Twinfilin-1 (350 aa).

Ser-2 carries the N-acetylserine modification. In terms of domain architecture, ADF-H 1 spans 2–139 (SHQTGIQASE…SLHGYKKYLL (138 aa)). A phosphoserine mark is found at Ser-143 and Ser-277. Residues 177–313 (GVAFPISQEA…TADFLYEEVH (137 aa)) enclose the ADF-H 2 domain. Phosphotyrosine is present on Tyr-309. Residues 316–350 (QHAHKQSFAKPKGPSGKRGIRRIIRGPAETEATTE) form a disordered region. At Thr-349 the chain carries Phosphothreonine.

The protein belongs to the actin-binding proteins ADF family. Twinfilin subfamily. In terms of assembly, interacts with G-actin; ADP-actin form and capping protein (CP). May also be able to interact with TWF2 and phosphoinositides, PI(4,5)P2. When bound to PI(4,5)P2, it is down-regulated. Interacts with ACTG1. In terms of processing, phosphorylated on serine and threonine residues.

Its subcellular location is the cytoplasm. It localises to the cytoskeleton. Functionally, actin-binding protein involved in motile and morphological processes. Inhibits actin polymerization, likely by sequestering G-actin. By capping the barbed ends of filaments, it also regulates motility. Seems to play an important role in clathrin-mediated endocytosis and distribution of endocytic organelles. The sequence is that of Twinfilin-1 (TWF1) from Bos taurus (Bovine).